A 75-amino-acid chain; its full sequence is Small ribosomal subunit protein eS31 (75 aa).

4 residues coordinate Zn(2+): cysteine 41, cysteine 44, cysteine 60, and cysteine 63. The C4-type zinc-finger motif lies at cysteine 41–cysteine 63.

Belongs to the eukaryotic ribosomal protein eS31 family. In terms of assembly, part of the 30S ribosomal subunit. Zn(2+) serves as cofactor.

The sequence is that of Small ribosomal subunit protein eS31 from Saccharolobus solfataricus (strain ATCC 35092 / DSM 1617 / JCM 11322 / P2) (Sulfolobus solfataricus).